Consider the following 219-residue polypeptide: Octanoyltransferase (219 aa).

Positions 37 to 219 (EHSPDQLWIL…DFNDVQVILQ (183 aa)) constitute a BPL/LPL catalytic domain. Substrate-binding positions include 76–83 (RGGQVTWH), 143–145 (SLG), and 156–158 (GLA). C174 acts as the Acyl-thioester intermediate in catalysis.

It belongs to the LipB family.

It localises to the cytoplasm. It carries out the reaction octanoyl-[ACP] + L-lysyl-[protein] = N(6)-octanoyl-L-lysyl-[protein] + holo-[ACP] + H(+). The protein operates within protein modification; protein lipoylation via endogenous pathway; protein N(6)-(lipoyl)lysine from octanoyl-[acyl-carrier-protein]: step 1/2. Functionally, catalyzes the transfer of endogenously produced octanoic acid from octanoyl-acyl-carrier-protein onto the lipoyl domains of lipoate-dependent enzymes. Lipoyl-ACP can also act as a substrate although octanoyl-ACP is likely to be the physiological substrate. This Acinetobacter baylyi (strain ATCC 33305 / BD413 / ADP1) protein is Octanoyltransferase.